The following is a 475-amino-acid chain: Subtilisin-like protease PopC (475 aa).

Disordered stretches follow at residues 1 to 27 (MKSYLLVPKESIETQARVGPRGTEQGE) and 57 to 106 (TLPG…QTGA). The 311-residue stretch at 165 to 475 (NRGMSSLAER…KTGKGLAVFR (311 aa)) folds into the Peptidase S8 domain. Catalysis depends on charge relay system residues D201, H243, and S423.

Belongs to the peptidase S8 family. Interacts with PopD in non-starving cells.

The protein localises to the cytoplasm. The protein resides in the periplasm. Its subcellular location is the secreted. With respect to regulation, in non-starving cells, secretion and protease activity are inhibited by formation of a cytoplasmic complex with PopD. In response to starvation, PopD is degraded in a RelA- and FtsH(D)-dependent manner, thereby releasing pre-formed PopC for secretion. Secreted and active during starvation, and rapidly degraded upon secretion. Secretion is significantly and reversibly reduced by carbonyl cyanide m-chlorophenyl hydrazine (CCCP), which dissipates or reduces the proton motive force (PMF), and by nigericin, which affects the pH gradient. Required for fruiting body formation, a multicellular developmental program that is induced in response to starvation. Acts as a subtilisin-like protease that directly cleaves the CsgA precursor protein (p25) on the cell surface to generate the intercellular C-signal protein (p17) in starving cells. Preferentially acts in cis, i.e. PopC secreted by a cell only cleaves p25 on that cell. May also be important for processing of other protein(s) that are important for development. The sequence is that of Subtilisin-like protease PopC from Myxococcus xanthus (strain DK1622).